An 840-amino-acid polypeptide reads, in one-letter code: Exocyst complex component 7 (840 aa).

The tract at residues 1 to 112 is disordered; that stretch reads MSAPPRLSAR…ATSTTSPFSY (112 aa). Residues 19–31 show a composition bias toward polar residues; the sequence is SNAPSPTSPTGLK. 2 stretches are compositionally biased toward low complexity: residues 50–73 and 83–111; these read KSSV…TLPK and QQQQ…SPFS. A coiled-coil region spans residues 193–227; it reads KNNATSELTEQDDQLENDKRDLQFIKEQLEKNNSM. The interval 601–638 is disordered; that stretch reads QDNNNSNSNSNAPSSTSSNSKSSSSSSSSSSSNSASST. A compositionally biased stretch (low complexity) spans 603–637; it reads NNNSNSNSNAPSSTSSNSKSSSSSSSSSSSNSASS.

This sequence belongs to the EXO70 family. The exocyst complex is composed of sec3/exoc1, sec5/exoc2, sec6/exoc3, sec8/exoc4, sec10/exoc5, sec15/exoc6, exo70/exoc7 and exo84/exoc8.

It localises to the cytoplasm. The protein localises to the cytosol. It is found in the cell membrane. Its subcellular location is the midbody. The protein resides in the midbody ring. In terms of biological role, component of the exocyst complex involved in the docking of exocytic vesicles with fusion sites on the plasma membrane. This Dictyostelium discoideum (Social amoeba) protein is Exocyst complex component 7 (exoc7).